The chain runs to 112 residues: Omega-agatoxin-1A (112 aa).

The first 19 residues, Met-1–Ala-19, serve as a signal peptide directing secretion. Residues Val-20–Arg-36 constitute a propeptide that is removed on maturation. Residues Arg-103 to Arg-109 constitute a propeptide, glu-rich.

It belongs to the neurotoxin 04 (omega-agtx) family. 01 (type I omega-agtx) subfamily. Heterodimer of two subunits, a major chain and a minor chain, linked by a disulfide bond. In terms of processing, proteolytically processed to yield the major and the minor chains. In terms of tissue distribution, expressed by the venom gland.

It is found in the secreted. Omega-agatoxins are antagonists of voltage-gated calcium channels. They block insect neuromuscular transmission presynaptically. This toxin is a blocker of L-type calcium channels (Cav/CACNA1). The chain is Omega-agatoxin-1A from Agelenopsis aperta (North American funnel-web spider).